A 152-amino-acid polypeptide reads, in one-letter code: SsrA-binding protein (152 aa).

It belongs to the SmpB family.

It localises to the cytoplasm. Functionally, required for rescue of stalled ribosomes mediated by trans-translation. Binds to transfer-messenger RNA (tmRNA), required for stable association of tmRNA with ribosomes. tmRNA and SmpB together mimic tRNA shape, replacing the anticodon stem-loop with SmpB. tmRNA is encoded by the ssrA gene; the 2 termini fold to resemble tRNA(Ala) and it encodes a 'tag peptide', a short internal open reading frame. During trans-translation Ala-aminoacylated tmRNA acts like a tRNA, entering the A-site of stalled ribosomes, displacing the stalled mRNA. The ribosome then switches to translate the ORF on the tmRNA; the nascent peptide is terminated with the 'tag peptide' encoded by the tmRNA and targeted for degradation. The ribosome is freed to recommence translation, which seems to be the essential function of trans-translation. This chain is SsrA-binding protein, found in Rickettsia massiliae (strain Mtu5).